Reading from the N-terminus, the 421-residue chain is Ameloblastin (421 aa).

The signal sequence occupies residues 1-26 (MPALKIPLFKMKDMVLILCLLKMSSA). The residue at position 37 (P37) is a Hydroxyproline. The residue at position 43 (S43) is a Phosphoserine. Disordered stretches follow at residues 104–126 (PVHP…QKPF), 264–311 (GGMP…ADPE), and 333–421 (GKIP…FQEP). An O-linked (GalNAc...) serine glycan is attached at S112. A compositionally biased stretch (low complexity) spans 113–125 (QPSLQPQQPGQKP). Residues 339–350 (ARGPAGRSRGPP) show a composition bias toward low complexity. Polar residues predominate over residues 388 to 410 (MDSTATPYSEHTSMPGNKAQQPQ). A compositionally biased stretch (basic and acidic residues) spans 411–421 (IKRDAWRFQEP).

Belongs to the ameloblastin family. In terms of tissue distribution, ameloblast-specific. Located at the Tomes processes of secretory ameloblasts and in the sheath space between rod-interrod enamel.

The protein localises to the secreted. It is found in the extracellular space. It localises to the extracellular matrix. Functionally, involved in the mineralization and structural organization of enamel. The protein is Ameloblastin (AMBN) of Sus scrofa (Pig).